The following is a 248-amino-acid chain: Protein STPG4 (248 aa).

In terms of assembly, interacts with histone H3. Interacts with histone H4.

The protein localises to the cytoplasm. The protein resides in the nucleus. Maternal factor that plays a role in epigenetic chromatin reprogramming during early development of the zygote. Involved in the regulation of gametic DNA demethylation by inducing the conversion of the modified genomic base 5-methylcytosine (5mC) into 5-hydroxymethylcytosine (5hmC). This Homo sapiens (Human) protein is Protein STPG4.